Here is a 240-residue protein sequence, read N- to C-terminus: Probable transcriptional regulatory protein MXAN_7062 (240 aa).

It belongs to the TACO1 family.

Its subcellular location is the cytoplasm. The protein is Probable transcriptional regulatory protein MXAN_7062 of Myxococcus xanthus (strain DK1622).